We begin with the raw amino-acid sequence, 136 residues long: MLATRNRLRTSTDFSTTVRSGVRNGRRNVVLYTVAIAADEPSRIGFIVSKSVGNAVVRNLVKRRLREAGALSLQQYGTGFAIVVRALPAAAAASWDQLLADYNAALETTMKRLGGRLPRAASVVSRETRQEGTPRA.

Belongs to the RnpA family. As to quaternary structure, consists of a catalytic RNA component (M1 or rnpB) and a protein subunit.

It carries out the reaction Endonucleolytic cleavage of RNA, removing 5'-extranucleotides from tRNA precursor.. RNaseP catalyzes the removal of the 5'-leader sequence from pre-tRNA to produce the mature 5'-terminus. It can also cleave other RNA substrates such as 4.5S RNA. The protein component plays an auxiliary but essential role in vivo by binding to the 5'-leader sequence and broadening the substrate specificity of the ribozyme. This is Ribonuclease P protein component from Arthrobacter sp. (strain FB24).